We begin with the raw amino-acid sequence, 116 residues long: Large ribosomal subunit protein uL18 (116 aa).

The protein belongs to the universal ribosomal protein uL18 family. In terms of assembly, part of the 50S ribosomal subunit; part of the 5S rRNA/L5/L18/L25 subcomplex. Contacts the 5S and 23S rRNAs.

Functionally, this is one of the proteins that bind and probably mediate the attachment of the 5S RNA into the large ribosomal subunit, where it forms part of the central protuberance. The polypeptide is Large ribosomal subunit protein uL18 (Shewanella loihica (strain ATCC BAA-1088 / PV-4)).